The following is a 345-amino-acid chain: Aspartate-semialdehyde dehydrogenase (345 aa).

NADP(+) is bound by residues 11–14 (TGQV) and 39–40 (RS). Phosphate is bound at residue arginine 99. Residue cysteine 130 is the Acyl-thioester intermediate of the active site. Substrate is bound at residue glutamine 157. Residue 160–161 (SG) participates in NADP(+) binding. A phosphate-binding site is contributed by lysine 227. Arginine 249 is a substrate binding site. Histidine 256 serves as the catalytic Proton acceptor. Residue asparagine 325 participates in NADP(+) binding.

It belongs to the aspartate-semialdehyde dehydrogenase family. In terms of assembly, homodimer.

The enzyme catalyses L-aspartate 4-semialdehyde + phosphate + NADP(+) = 4-phospho-L-aspartate + NADPH + H(+). It participates in amino-acid biosynthesis; L-lysine biosynthesis via DAP pathway; (S)-tetrahydrodipicolinate from L-aspartate: step 2/4. Its pathway is amino-acid biosynthesis; L-methionine biosynthesis via de novo pathway; L-homoserine from L-aspartate: step 2/3. It functions in the pathway amino-acid biosynthesis; L-threonine biosynthesis; L-threonine from L-aspartate: step 2/5. Catalyzes the NADPH-dependent formation of L-aspartate-semialdehyde (L-ASA) by the reductive dephosphorylation of L-aspartyl-4-phosphate. The polypeptide is Aspartate-semialdehyde dehydrogenase (Mycobacterium bovis (strain ATCC BAA-935 / AF2122/97)).